Consider the following 356-residue polypeptide: Ubiquitin-conjugating enzyme E2 variant 3 (356 aa).

Residues 1 to 83 (MSDQPGTSRP…LEDLHNYHRE (83 aa)) are disordered. Polar residues predominate over residues 18 to 32 (PTKTATRRRARPIAI). The span at 63–76 (QPRKTVPKNVPLED) shows a compositional bias: basic and acidic residues. The 156-residue stretch at 169–324 (DIITEFMNRS…AREFVMKMAG (156 aa)) folds into the UBC core domain.

Belongs to the ubiquitin-conjugating enzyme family. In terms of assembly, may interact with pmk-3. Expressed ubiquitously.

It localises to the nucleus. The protein resides in the cytoplasm. Its subcellular location is the cell projection. It is found in the dendrite. The protein localises to the axon. It localises to the cilium. In terms of biological role, possible negative regulator of polyubiquitination. May modulate the activity of the p38 MAP kinase pnk-3. May have a role in axon termination and synaptic transmission at motor and mechanosensory neurons. Plays a role in intraflagellar transport in cilia and cilium length regulation. In Caenorhabditis elegans, this protein is Ubiquitin-conjugating enzyme E2 variant 3.